The primary structure comprises 163 residues: Peptidyl-prolyl cis-trans isomerase NIMA-interacting 1 (163 aa).

Residues 5-39 (EKLPPGWEKRMSRSSGRVYYFNHITNASQWERPSG) form the WW domain. Residues 33–54 (QWERPSGNSSSGGKNGQGEPAR) are disordered. Residue Ser-43 is modified to Phosphoserine. Lys-46 carries the post-translational modification N6-acetyllysine. In terms of domain architecture, PpiC spans 52 to 163 (PARVRCSHLL…SGIHIILRTE (112 aa)). Ser-71 carries the phosphoserine; by DAPK1 modification. Position 108 is a phosphoserine (Ser-108).

As to quaternary structure, interacts with STIL. Interacts with KIF20B. Interacts with NEK6. Interacts (via WW domain) with PRKX. Interacts with BTK. Interacts (via PpiC domain) with DAPK1. Interacts with the phosphorylated form of RAF1. Interacts (via WW domain) with ATCAY; upon NGF stimulation. Interacts with PML (isoform PML-4). Interacts with BCL6. Interacts with FBXW7, disrupting FBXW7 dimerization and promoting FBXW7 autoubiquitination and degradation. Directly interacts with RBBP8/CtIP; this interaction depends upon RBBP8 phosphorylation. Interacts (via WW domain) with IRAK3/IRAK-M (when phosphorylated at 'Ser-110') in response to IL33-mediated (but not TLR4 ligand LPS) dendritic cell stimulation. Interacts with PGK1 (when phosphorylated at 'Ser-203'); the interaction is direct, occurs under hypoxic conditions, and targets PGK1 to the mitochondrion by promoting interactions with the TOM complex. Post-translationally, phosphorylation at Ser-71 by DAPK1 results in inhibition of its catalytic activity, nuclear localization, and its ability to induce centrosome amplification, chromosome instability and cell transformation. Ser-71 is dephosphorylated upon IL33-stimulation of dendritic cells. As to expression, expressed in immune cells in the lung (at protein level). The phosphorylated form at Ser-71 is expressed in normal breast tissue cells but not in breast cancer cells.

The protein resides in the nucleus. It is found in the nucleus speckle. The protein localises to the cytoplasm. It carries out the reaction [protein]-peptidylproline (omega=180) = [protein]-peptidylproline (omega=0). Its function is as follows. Peptidyl-prolyl cis/trans isomerase (PPIase) that binds to and isomerizes specific phosphorylated Ser/Thr-Pro (pSer/Thr-Pro) motifs. By inducing conformational changes in a subset of phosphorylated proteins, acts as a molecular switch in multiple cellular processes. Displays a preference for acidic residues located N-terminally to the proline bond to be isomerized. Regulates mitosis presumably by interacting with NIMA and attenuating its mitosis-promoting activity. Down-regulates kinase activity of BTK. Can transactivate multiple oncogenes and induce centrosome amplification, chromosome instability and cell transformation. Required for the efficient dephosphorylation and recycling of RAF1 after mitogen activation. Binds and targets PML and BCL6 for degradation in a phosphorylation-dependent manner. Acts as a regulator of JNK cascade by binding to phosphorylated FBXW7, disrupting FBXW7 dimerization and promoting FBXW7 autoubiquitination and degradation: degradation of FBXW7 leads to subsequent stabilization of JUN. May facilitate the ubiquitination and proteasomal degradation of RBBP8/CtIP through CUL3/KLHL15 E3 ubiquitin-protein ligase complex, hence favors DNA double-strand repair through error-prone non-homologous end joining (NHEJ) over error-free, RBBP8-mediated homologous recombination (HR). Upon IL33-induced lung inflammation, catalyzes cis-trans isomerization of phosphorylated IRAK3/IRAK-M, inducing IRAK3 stabilization, nuclear translocation and expression of pro-inflammatory genes in dendritic cells. Catalyzes cis-trans isomerization of phosphorylated phosphoglycerate kinase PGK1 under hypoxic conditions to promote its binding to the TOM complex and targeting to the mitochondrion. In Homo sapiens (Human), this protein is Peptidyl-prolyl cis-trans isomerase NIMA-interacting 1 (PIN1).